Reading from the N-terminus, the 1006-residue chain is MHYDGHVRFDLPPQGSVLARNVSTRSCPPRTSPAVDLEEEEEESSVDGKGDRKSTGLKLSKKKARRRHTDDPSKECFTLKFDLNVDIETEIVPAMKKKSLGEVLLPVFERKGIALGKVDIYLDQSNTPLSLTFEAYRFGGHYLRVKAPAKPGDEGKVEQGMKDSKSLSLPILRPAGTGPPALERVDAQSRRESLDILAPGRRRKNMSEFLGEASIPGQEPPTPSSCSLPSGSSGSTNTGDSWKNRAASRFSGFFSSGPSTSAFGREVDKMEQLEGKLHTYSLFGLPRLPRGLRFDHDSWEEEYDEDEDEDNACLRLEDSWRELIDGHEKLTRRQCHQQEAVWELLHTEASYIRKLRVIINLFLCCLLNLQESGLLCEVEAERLFSNIPEIAQLHRRLWASVMAPVLEKARRTRALLQPGDFLKGFKMFGSLFKPYIRYCMEEEGCMEYMRGLLRDNDLFRAYITWAEKHPQCQRLKLSDMLAKPHQRLTKYPLLLKSVLRKTEEPRAKEAVVAMIGSVERFIHHVNACMRQRQERQRLAAVVSRIDAYEVVESSSDEVDKLLKEFLHLDLTAPIPGASPEETRQLLLEGSLRMKEGKDSKMDVYCFLFTDLLLVTKAVKKAERTRVIRPPLLVDKIVCRELRDPGSFLLIYLNEFHSAVGAYTFQASGQALCRGWVDTIYNAQNQLQQLRAQEPPGSQQPLQSLEEEEDEQEEEEEEEEEEEEGEDSGTSAASSPTIMRKSSGSPDSQHCASDGSTETLAMVVVEPGDTLSSPEFDSGPFSSQSDETSLSTTASSATPTSELLPLGPVDGRSCSMDSAYGTLSPTSLQDFVAPGPMAELVPRAPESPRVPSPPPSPRLRRRTPVQLLSCPPHLLKSKSEASLLQLLAGAGTHGTPSAPSRSLSELCLAVPAPGIRTQGSPQEAGPSWDCRGAPSPGSGPGLVGCLAGEPAGSHRKRCGDLPSGASPRVQPEPPPGVSAQHRKLTLAQLYRIRTTLLLNSTLTASEV.

Disordered regions lie at residues 1-71, 148-198, and 212-242; these read MHYD…HTDD, PAKP…DILA, and EASI…GDSW. Positions 36–45 are enriched in acidic residues; sequence DLEEEEEESS. Basic and acidic residues-rich tracts occupy residues 151–165 and 183–194; these read PGDE…KDSK and ERVDAQSRRESL. The segment covering 224 to 242 has biased composition (low complexity); the sequence is SSCSLPSGSSGSTNTGDSW. One can recognise a DH domain in the interval 336-528; it reads HQQEAVWELL…ERFIHHVNAC (193 aa). Positions 584–684 constitute a PH domain; the sequence is QLLLEGSLRM…WVDTIYNAQN (101 aa). Disordered regions lie at residues 690–754, 768–820, and 837–863; these read RAQE…ASDG, DTLS…SAYG, and AELV…RRTP. Over residues 704-726 the composition is skewed to acidic residues; it reads LEEEEDEQEEEEEEEEEEEEGED. 2 stretches are compositionally biased toward polar residues: residues 727–754 and 769–785; these read SGTS…ASDG and TLSS…SQSD. The residue at position 729 (threonine 729) is a Phosphothreonine. At serine 734 the chain carries Phosphoserine. The segment covering 786–803 has biased composition (low complexity); that stretch reads ETSLSTTASSATPTSELL. Residues 847–856 show a composition bias toward pro residues; the sequence is PRVPSPPPSP. 3 positions are modified to phosphoserine: serine 851, serine 876, and serine 881. The tract at residues 950 to 979 is disordered; that stretch reads AGSHRKRCGDLPSGASPRVQPEPPPGVSAQ.

Interacts with GIPC1/synectin and RHOA. In terms of tissue distribution, predominantly expressed in the peripheral nervous system and brain. Highest expression is observed in heart, lung, kidney, testis and moderate expression is present in spleen, pancreas, skeletal muscle, ovary and liver. Weakly expressed in glioblastoma (GBM) cell lines.

The protein resides in the cytoplasm. Its subcellular location is the perinuclear region. It localises to the cell membrane. It is found in the cell junction. The protein localises to the cell projection. The protein resides in the lamellipodium. Functions as a guanine exchange factor (GEF) for RAB26 and thus regulates autophagy of synaptic vesicles in axon terminal of motoneurons. Involved in the control of neuronal cell differentiation. Plays a role in angiogenesis through regulation of endothelial cells chemotaxis. Also affects the migration, adhesion, and matrix/bone degradation in macrophages and osteoclasts. The sequence is that of Pleckstrin homology domain-containing family G member 5 (PLEKHG5) from Homo sapiens (Human).